The following is a 385-amino-acid chain: T-box transcription factor TBX10 (385 aa).

A DNA-binding region (T-box) is located at residues 69 to 252; sequence LEMKPLWEEF…SNPFAKGFRE (184 aa). Disordered stretches follow at residues 283–310 and 328–359; these read GSAE…NQLL and QNLY…AGDQ. Over residues 293–307 the composition is skewed to polar residues; it reads KASASSSRTPTQPHN. Residues 331 to 347 show a composition bias toward low complexity; sequence YPGSPSRAGPPRARLAP.

The protein resides in the nucleus. In terms of biological role, probable transcriptional regulator involved in developmental processes. This Mus musculus (Mouse) protein is T-box transcription factor TBX10 (Tbx10).